Here is a 348-residue protein sequence, read N- to C-terminus: Phospho-2-dehydro-3-deoxyheptonate aldolase, Trp-sensitive (348 aa).

It belongs to the class-I DAHP synthase family.

The catalysed reaction is D-erythrose 4-phosphate + phosphoenolpyruvate + H2O = 7-phospho-2-dehydro-3-deoxy-D-arabino-heptonate + phosphate. It participates in metabolic intermediate biosynthesis; chorismate biosynthesis; chorismate from D-erythrose 4-phosphate and phosphoenolpyruvate: step 1/7. Its function is as follows. Stereospecific condensation of phosphoenolpyruvate (PEP) and D-erythrose-4-phosphate (E4P) giving rise to 3-deoxy-D-arabino-heptulosonate-7-phosphate (DAHP). In Shigella flexneri, this protein is Phospho-2-dehydro-3-deoxyheptonate aldolase, Trp-sensitive (aroH).